Consider the following 490-residue polypeptide: AP-5 complex subunit mu-1 (490 aa).

The 271-residue stretch at 206–476 (KPQVSISITE…LISSDYYIWN (271 aa)) folds into the MHD domain.

It belongs to the adaptor complexes medium subunit family. Probably part of the adaptor protein complex 5 (AP-5) a tetramer composed of AP5B1, AP5M1, AP5S1 and AP5Z1. As to expression, expressed in various tumor cell lines including Jurkat, Hep-G2 and HeLa.

It is found in the cytoplasm. The protein resides in the cytosol. The protein localises to the late endosome membrane. It localises to the lysosome membrane. In terms of biological role, as part of AP-5, a probable fifth adaptor protein complex it may be involved in endosomal transport. According to PubMed:18395520, it may play a role in cell death. The chain is AP-5 complex subunit mu-1 (AP5M1) from Homo sapiens (Human).